A 510-amino-acid chain; its full sequence is 1,3-beta-glucanosyltransferase gas5 (510 aa).

The signal sequence occupies residues 1 to 22 (MNFLHFLTTSLLLLGGSRLALA). Cys70 and Cys99 are joined by a disulfide. Tyr88 lines the (1,3-beta-D-glucosyl)n pocket. The N-linked (GlcNAc...) asparagine glycan is linked to Asn147. (1,3-beta-D-glucosyl)n-binding residues include Asn158, Glu159, Asp200, and Arg205. Glu159 functions as the Proton donor in the catalytic mechanism. 2 disulfide bridges follow: Cys214–Cys353 and Cys232–Cys264. N-linked (GlcNAc...) asparagine glycans are attached at residues Asn216 and Asn252. The active-site Nucleophile is Glu261. (1,3-beta-D-glucosyl)n is bound at residue Tyr300. 3 N-linked (GlcNAc...) asparagine glycosylation sites follow: Asn318, Asn337, and Asn397. Residues 424–456 (QSSTSGSSSGSSSASTTASSSSVSSGSSISSGS) form a disordered region. Ser485 is lipidated: GPI-anchor amidated serine. The propeptide at 486-510 (SASTFNLSRFYVFAGILAISGLVFA) is removed in mature form. N-linked (GlcNAc...) asparagine glycosylation is present at Asn491.

It belongs to the glycosyl hydrolase 72 family. Post-translationally, the GPI-anchor is attached to the protein in the endoplasmic reticulum and serves to target the protein to the cell surface. There, the glucosamine-inositol phospholipid moiety is cleaved off and the GPI-modified mannoprotein is covalently attached via its lipidless GPI glycan remnant to the 1,6-beta-glucan of the outer cell wall layer.

It localises to the secreted. The protein resides in the cell wall. Its subcellular location is the membrane. Splits internally a 1,3-beta-glucan molecule and transfers the newly generated reducing end (the donor) to the non-reducing end of another 1,3-beta-glucan molecule (the acceptor) forming a 1,3-beta linkage, resulting in the elongation of 1,3-beta-glucan chains in the cell wall. This Schizosaccharomyces pombe (strain 972 / ATCC 24843) (Fission yeast) protein is 1,3-beta-glucanosyltransferase gas5 (gas5).